The sequence spans 294 residues: 4-diphosphocytidyl-2-C-methyl-D-erythritol kinase (294 aa).

Residue Lys-11 is part of the active site. 96–106 (PVAAGIGGGSA) serves as a coordination point for ATP. Residue Asp-138 is part of the active site.

The protein belongs to the GHMP kinase family. IspE subfamily.

The catalysed reaction is 4-CDP-2-C-methyl-D-erythritol + ATP = 4-CDP-2-C-methyl-D-erythritol 2-phosphate + ADP + H(+). It participates in isoprenoid biosynthesis; isopentenyl diphosphate biosynthesis via DXP pathway; isopentenyl diphosphate from 1-deoxy-D-xylulose 5-phosphate: step 3/6. Catalyzes the phosphorylation of the position 2 hydroxy group of 4-diphosphocytidyl-2C-methyl-D-erythritol. The protein is 4-diphosphocytidyl-2-C-methyl-D-erythritol kinase of Rhodopseudomonas palustris (strain BisB5).